Consider the following 260-residue polypeptide: 3'-5' ssDNA/RNA exonuclease TatD (260 aa).

3 residues coordinate a divalent metal cation: glutamate 91, histidine 127, and histidine 152.

This sequence belongs to the metallo-dependent hydrolases superfamily. TatD-type hydrolase family. TatD subfamily. Monomer. Mg(2+) is required as a cofactor.

Its subcellular location is the cytoplasm. 3'-5' exonuclease that prefers single-stranded DNA and RNA. May play a role in the H(2)O(2)-induced DNA damage repair. This chain is 3'-5' ssDNA/RNA exonuclease TatD, found in Citrobacter koseri (strain ATCC BAA-895 / CDC 4225-83 / SGSC4696).